A 55-amino-acid polypeptide reads, in one-letter code: A-type ATP synthase subunit G (55 aa).

Has multiple subunits, A(3), B(3), C, D, E, F, G, I and K(x); there may be a few other subunits as well.

It is found in the cell membrane. In terms of biological role, component of the A-type ATP synthase that produces ATP from ADP in the presence of a proton gradient across the membrane. The protein is A-type ATP synthase subunit G (atpG) of Methanosarcina mazei (strain ATCC BAA-159 / DSM 3647 / Goe1 / Go1 / JCM 11833 / OCM 88) (Methanosarcina frisia).